A 3527-amino-acid polypeptide reads, in one-letter code: BEACH domain-containing protein A2 (3527 aa).

3 disordered regions span residues 25 to 46 (AGEAISDPTTPPSSSQASPSSS), 385 to 423 (SSPHKNRGSNDSKKQPPLSLKTRQNDDSEKQQSLSLNSR), and 454 to 490 (ESSGTSTSLLSQTKLTGYSRRQTPSANNRYDEPCEQG). Residues 28-46 (AISDPTTPPSSSQASPSSS) show a composition bias toward low complexity. Positions 455–469 (SSGTSTSLLSQTKLT) are enriched in low complexity. Residues 472–481 (SRRQTPSANN) show a composition bias toward polar residues. 5 LRR repeats span residues 1447–1470 (KLESGQTTISMSPTEIIPENNYED), 1499–1522 (FSHLSELEMGDNPVETSNCIVLSN), 1542–1565 (SIQIASLGFLENLISILWYRSHNL), 1566–1588 (AILRQINLVKHLLVTLQRGDVEV), and 2001–2024 (SSEMKSLDLTGSSSQVQPIDSRSS). Disordered stretches follow at residues 1992–2023 (GDHVGSVSASSEMKSLDLTGSSSQVQPIDSRS) and 2046–2081 (IPSPSKSSTISTPHPSHISVSEFDASSDQSSGSQGS). The span at 1998-2020 (VSASSEMKSLDLTGSSSQVQPID) shows a compositional bias: polar residues. 3 LRR repeats span residues 2128–2151 (TEQIKAVQALESILEMLPLYVDPE), 2221–2247 (LLSILQLANKDGRVEEVTSSGKGLLSI), and 2313–2336 (VSAVLQLLVANKNIILCPSNLDTD). A disordered region spans residues 2658 to 2680 (VNTDEKSETGSPIKSSSGKMDEI). The segment covering 2666 to 2675 (TGSPIKSSSG) has biased composition (polar residues). Residues 2704–2871 (EHLEKIRFRY…EREEVFRNLL (168 aa)) enclose the BEACH-type PH domain. In terms of domain architecture, BEACH spans 2896–3188 (GSRLFKLMAK…QLFQKPHVKR (293 aa)). WD repeat units lie at residues 3272-3311 (HEGNQIQCAGVSHDGRIVVTGAEDGLVSVWRVSKDGPRGS), 3322-3361 (AHTAKVICLRVSQPYMMIASSSDDCTVIIWDLSSLSFVRQ), 3410-3451 (DLIV…DPVS), and 3483-3522 (FHKQPVTSLHLTTDLKQLLSGDSAGHLLSWTVPDEILKAS).

The protein is BEACH domain-containing protein A2 of Arabidopsis thaliana (Mouse-ear cress).